The following is a 119-amino-acid chain: Holo-[acyl-carrier-protein] synthase (119 aa).

Mg(2+) contacts are provided by Asp-8 and Glu-58.

Belongs to the P-Pant transferase superfamily. AcpS family. Mg(2+) is required as a cofactor.

It localises to the cytoplasm. It carries out the reaction apo-[ACP] + CoA = holo-[ACP] + adenosine 3',5'-bisphosphate + H(+). Its function is as follows. Transfers the 4'-phosphopantetheine moiety from coenzyme A to a Ser of acyl-carrier-protein. In Lactobacillus johnsonii (strain CNCM I-12250 / La1 / NCC 533), this protein is Holo-[acyl-carrier-protein] synthase.